The following is a 420-amino-acid chain: Probable secreted beta-glucosidase SUN4 (420 aa).

A signal peptide spans 1 to 24 (MKLSATTLTAASLIGYSTIVSALP). Residues 89 to 145 (TKSSSKVASSSESTEQIATTSSSAQTTLTSSETSTSESSVPISTSGSASTSSAASSA) are disordered. The N-linked (GlcNAc...) asparagine glycan is linked to Asn395.

This sequence belongs to the SUN family. Post-translationally, glycosylated.

It is found in the secreted. The protein localises to the cell wall. In terms of biological role, involved in the remodeling of the cell wall during the various phases of yeast culture development and under various environmental conditions and plays a role in septation. In Saccharomyces cerevisiae (strain ATCC 204508 / S288c) (Baker's yeast), this protein is Probable secreted beta-glucosidase SUN4 (SUN4).